Here is a 452-residue protein sequence, read N- to C-terminus: Prenyltransferase fsdK (452 aa).

The protein belongs to the tryptophan dimethylallyltransferase family.

It participates in mycotoxin biosynthesis. Functionally, prenyltransferase; part of the gene cluster that mediates the biosynthesis of fusaridione A, a bright yellow trans-fused decalin-containing tetramic acid with antimicrobial activity. The PKS module of fsdS catalyzes the formation of the polyketide unit which is then conjugated to L-tyrosine by the condensation domain of the fsdS NRPS module. Activity of the Dieckmann cyclase domain (RED) results in release of the intermediate fusaridione A. The unstable pyrrolidinedione ring of fusaridione A is opened through a reverse-Dieckmann reaction to afford its ring-opened form. In Fusarium heterosporum, this protein is Prenyltransferase fsdK.